The following is a 482-amino-acid chain: uncharacterized protein (482 aa).

12 helical membrane-spanning segments follow: residues 40 to 57 (LDWY…LSFL), 83 to 103 (AAVS…VLLV), 109 to 129 (HYYL…TCFV), 140 to 160 (LLLG…ISMT), 170 to 190 (LAYL…IATG), 205 to 225 (WLYI…LFCL), 278 to 298 (VIQF…PSIL), 311 to 331 (YMSV…CLLS), 338 to 358 (GWFI…LLAT), 366 to 386 (VATY…ITWI), 399 to 418 (ALGC…GQVY), and 428 to 448 (GFAL…RFYL).

The protein belongs to the major facilitator superfamily. Allantoate permease family.

Its subcellular location is the endoplasmic reticulum. The protein resides in the membrane. This is an uncharacterized protein from Schizosaccharomyces pombe (strain 972 / ATCC 24843) (Fission yeast).